The following is a 428-amino-acid chain: Enolase (428 aa).

Gln162 contacts (2R)-2-phosphoglycerate. Glu204 acts as the Proton donor in catalysis. Mg(2+) contacts are provided by Asp241, Glu282, and Asp309. Residues Lys334, Arg363, Ser364, and Lys385 each coordinate (2R)-2-phosphoglycerate. The active-site Proton acceptor is the Lys334.

It belongs to the enolase family. Requires Mg(2+) as cofactor.

Its subcellular location is the cytoplasm. The protein resides in the secreted. It is found in the cell surface. The enzyme catalyses (2R)-2-phosphoglycerate = phosphoenolpyruvate + H2O. It functions in the pathway carbohydrate degradation; glycolysis; pyruvate from D-glyceraldehyde 3-phosphate: step 4/5. Functionally, catalyzes the reversible conversion of 2-phosphoglycerate (2-PG) into phosphoenolpyruvate (PEP). It is essential for the degradation of carbohydrates via glycolysis. This chain is Enolase, found in Mycobacterium ulcerans (strain Agy99).